The primary structure comprises 313 residues: uncharacterized protein (313 aa).

This is an uncharacterized protein from Acanthamoeba polyphaga mimivirus (APMV).